A 432-amino-acid polypeptide reads, in one-letter code: Adenylosuccinate synthetase (432 aa).

GTP contacts are provided by residues 13–19 (GDEGKGK) and 41–43 (GHT). Asp14 (proton acceptor) is an active-site residue. Residues Asp14 and Gly41 each coordinate Mg(2+). IMP-binding positions include 14–17 (DEGK), 39–42 (NAGH), Thr131, Arg145, Gln226, Thr241, and Arg305. The active-site Proton donor is His42. 301-307 (SVTGRAR) is a substrate binding site. GTP is bound by residues Arg307, 333–335 (KLD), and 416–418 (STG).

The protein belongs to the adenylosuccinate synthetase family. As to quaternary structure, homodimer. The cofactor is Mg(2+).

The protein resides in the cytoplasm. It carries out the reaction IMP + L-aspartate + GTP = N(6)-(1,2-dicarboxyethyl)-AMP + GDP + phosphate + 2 H(+). The protein operates within purine metabolism; AMP biosynthesis via de novo pathway; AMP from IMP: step 1/2. Functionally, plays an important role in the de novo pathway of purine nucleotide biosynthesis. Catalyzes the first committed step in the biosynthesis of AMP from IMP. The sequence is that of Adenylosuccinate synthetase from Neisseria meningitidis serogroup C (strain 053442).